The following is a 783-amino-acid chain: FYN-binding protein 1 (783 aa).

Polar residues-rich tracts occupy residues 1-18 and 25-45; these read MAKY…SVNS and GPNS…QGNA. Positions 1-502 are disordered; that stretch reads MAKYNTGGNP…KEKKEQEIKK (502 aa). Lysine 3 carries the N6-acetyllysine modification. 2 positions are modified to phosphoserine: serine 28 and serine 46. Residues 69–79 are compositionally biased toward basic and acidic residues; that stretch reads SSEEKPDKEPK. Serine 225 is modified (phosphoserine). 2 stretches are compositionally biased toward basic and acidic residues: residues 240–252 and 278–290; these read PARE…DHAG and NGEE…KIDA. A Phosphoserine modification is found at serine 329. Residues 345-363 show a composition bias toward pro residues; it reads KPLPPLFTLGPPPPKPNRP. The tract at residues 348-448 is interaction with SKAP1; that stretch reads PPLFTLGPPP…QDGVTHSDGA (101 aa). A compositionally biased stretch (polar residues) spans 374-387; it reads TSSGNSTSKGQTSY. Residues 392-424 show a composition bias toward pro residues; it reads LPPPPPSHPASQPPLPASHPSQPPVPSLPPRNI. Over residues 451 to 465 the composition is skewed to acidic residues; that stretch reads LDEEQDSEGETYEDI. The stretch at 456-507 forms a coiled coil; sequence DSEGETYEDIEASKEREKKREKEEKKRLELEKKEQKEKEKKEQEIKKKFKLT. Serine 457 carries the phosphoserine modification. The SH2-binding motif lies at 462–465; that stretch reads YEDI. Positions 466–501 are enriched in basic and acidic residues; the sequence is EASKEREKKREKEEKKRLELEKKEQKEKEKKEQEIK. A Nuclear localization signal motif is present at residues 469 to 505; it reads KEREKKREKEEKKRLELEKKEQKEKEKKEQEIKKKFK. The region spanning 511–572 is the SH3 1 domain; that stretch reads QVIHLAKACC…KTTAVEIDYD (62 aa). A Phosphotyrosine modification is found at tyrosine 571. Residues serine 573 and serine 580 each carry the phosphoserine modification. Positions 595 to 598 match the SH2-binding; to LCP2 motif; the sequence is YDDV. The segment at 598–678 is disordered; sequence VAEQDDISSH…GTNVGKAKTE (81 aa). 2 stretches are compositionally biased toward acidic residues: residues 620 to 635 and 646 to 656; these read PDDD…DADD and MGDEVYDDVDT. The SH2-binding; to FYN motif lies at 625–628; that stretch reads YDGI. Tyrosine 651 carries the post-translational modification Phosphotyrosine. The Nuclear localization signal motif lies at 674-700; sequence KAKTEEKDLKKLKKQEKEEKDFRKKFK. One can recognise an SH3 2 domain in the interval 700-768; that stretch reads KYDGEIRVLY…LRSYLADNDG (69 aa).

As to quaternary structure, part of a complex consisting of SKAP2, FYB1 and PTPNS1. Part of a complex consisting of SKAP2, FYB1 and LILRB3. Part of a complex consisting of SKAP1, FYB1 and CLNK. Interacts with CLNK (via its SH2 domain); this interaction allows SKAP1 and FYB1 to recruit FYN to the complex, thus promoting the phosphorylation of CLNK by FYN. Interacts with FYN. Interacts with LCP2. Interacts with SKAP1. Interacts with SKAP2. Interacts with FASLG. Interacts with EVL. Interacts with TMEM47. Interacts with LCK. Post-translationally, T-cell receptor ligation leads to increased tyrosine phosphorylation. In terms of tissue distribution, expressed in hematopoietic tissues such as myeloid and T-cells, spleen and thymus. Not expressed in B-cells, nor in non-lymphoid tissues.

The protein localises to the cytoplasm. Its subcellular location is the nucleus. The protein resides in the cell junction. In terms of biological role, acts as an adapter protein of the FYN and LCP2 signaling cascades in T-cells. May play a role in linking T-cell signaling to remodeling of the actin cytoskeleton. Modulates the expression of IL2. Involved in platelet activation. Prevents the degradation of SKAP1 and SKAP2. May be involved in high affinity immunoglobulin epsilon receptor signaling in mast cells. The chain is FYN-binding protein 1 from Homo sapiens (Human).